A 277-amino-acid polypeptide reads, in one-letter code: Putative pyruvate, phosphate dikinase regulatory protein (277 aa).

An ADP-binding site is contributed by Gly151 to Thr158.

The protein belongs to the pyruvate, phosphate/water dikinase regulatory protein family. PDRP subfamily.

It carries out the reaction N(tele)-phospho-L-histidyl/L-threonyl-[pyruvate, phosphate dikinase] + ADP = N(tele)-phospho-L-histidyl/O-phospho-L-threonyl-[pyruvate, phosphate dikinase] + AMP + H(+). The catalysed reaction is N(tele)-phospho-L-histidyl/O-phospho-L-threonyl-[pyruvate, phosphate dikinase] + phosphate + H(+) = N(tele)-phospho-L-histidyl/L-threonyl-[pyruvate, phosphate dikinase] + diphosphate. Its function is as follows. Bifunctional serine/threonine kinase and phosphorylase involved in the regulation of the pyruvate, phosphate dikinase (PPDK) by catalyzing its phosphorylation/dephosphorylation. This Alkaliphilus metalliredigens (strain QYMF) protein is Putative pyruvate, phosphate dikinase regulatory protein.